Reading from the N-terminus, the 444-residue chain is Argininosuccinate synthase (444 aa).

ATP contacts are provided by residues 18 to 26 (AFSGGLDTS) and Ala-44. Tyr-100 is a binding site for L-citrulline. ATP contacts are provided by Gly-130 and Thr-132. L-aspartate-binding residues include Thr-132, Asn-136, and Asp-137. Asn-136 serves as a coordination point for L-citrulline. Asp-137 provides a ligand contact to ATP. L-citrulline-binding residues include Arg-140 and Ser-193. Asp-195 is a binding site for ATP. Residues Thr-202, Glu-204, and Glu-281 each contribute to the L-citrulline site.

The protein belongs to the argininosuccinate synthase family. Type 2 subfamily. Homotetramer.

The protein localises to the cytoplasm. It carries out the reaction L-citrulline + L-aspartate + ATP = 2-(N(omega)-L-arginino)succinate + AMP + diphosphate + H(+). The protein operates within amino-acid biosynthesis; L-arginine biosynthesis; L-arginine from L-ornithine and carbamoyl phosphate: step 2/3. This is Argininosuccinate synthase from Haemophilus influenzae (strain PittEE).